Reading from the N-terminus, the 548-residue chain is Chaperonin GroEL 1 (548 aa).

Residues 30-33 (TLGP), K51, 87-91 (DGTTT), G415, 479-481 (NAA), and D495 each bind ATP.

It belongs to the chaperonin (HSP60) family. Forms a cylinder of 14 subunits composed of two heptameric rings stacked back-to-back. Interacts with the co-chaperonin GroES.

Its subcellular location is the cytoplasm. The enzyme catalyses ATP + H2O + a folded polypeptide = ADP + phosphate + an unfolded polypeptide.. In terms of biological role, together with its co-chaperonin GroES, plays an essential role in assisting protein folding. The GroEL-GroES system forms a nano-cage that allows encapsulation of the non-native substrate proteins and provides a physical environment optimized to promote and accelerate protein folding. In Escherichia coli O1:K1 / APEC, this protein is Chaperonin GroEL 1.